The following is a 690-amino-acid chain: Eukaryotic translation initiation factor 3 subunit B (690 aa).

A compositionally biased stretch (basic and acidic residues) spans 1–11 (MAKKKSEEHSG). A disordered region spans residues 1-36 (MAKKKSEEHSGADANDSDYQEEPNFEDPPGFVDNIS). Residues 15–25 (NDSDYQEEPNF) are compositionally biased toward acidic residues. In terms of domain architecture, RRM spans 57 to 141 (SVVVVDNIPK…HTFAVNLFTD (85 aa)). 5 WD repeats span residues 207–246 (TRER…KIQK), 293–331 (DGMS…LLDL), 334–369 (IKIP…TLME), 442–484 (EIRE…KPSL), and 530–575 (PDHF…IKRT). Residues 595 to 645 (EEKQKEIKKNLKKYYAAFEQKDRLRLTRASKELLEKRSQLRETFMEYRNKR) are a coiled coil.

The protein belongs to the eIF-3 subunit B family. As to quaternary structure, component of the eukaryotic translation initiation factor 3 (eIF-3) complex. The eIF-3 complex interacts with pix. Interacts with mxt.

It localises to the cytoplasm. Its function is as follows. RNA-binding component of the eukaryotic translation initiation factor 3 (eIF-3) complex, which is involved in protein synthesis of a specialized repertoire of mRNAs and, together with other initiation factors, stimulates binding of mRNA and methionyl-tRNAi to the 40S ribosome. The eIF-3 complex specifically targets and initiates translation of a subset of mRNAs involved in cell proliferation. This chain is Eukaryotic translation initiation factor 3 subunit B, found in Drosophila yakuba (Fruit fly).